We begin with the raw amino-acid sequence, 1082 residues long: Inner tegument protein (1082 aa).

An interaction with large tegument protein region spans residues 604 to 1082 (DHIDCLFNIS…QQDLIAPLTF (479 aa)).

The protein belongs to the herpesviridae inner tegument protein family. As to quaternary structure, interacts (via C-terminus) with the large tegument protein/LTP (via N-terminus).

It localises to the virion tegument. Its subcellular location is the host cytoplasm. The protein resides in the host nucleus. The protein localises to the host Golgi apparatus. It is found in the host trans-Golgi network. In terms of biological role, plays an essential role in cytoplasmic secondary envelopment during viral egress. Interacts with the capsid via the large tegument protein/LTP and participates in its transport to the host trans-Golgi network (TGN) where secondary envelopment occurs. Modulates tegumentation and capsid accumulation at the viral assembly complex. In Homo sapiens (Human), this protein is Inner tegument protein (U30).